A 213-amino-acid chain; its full sequence is Probable thiopurine S-methyltransferase (213 aa).

S-adenosyl-L-methionine contacts are provided by W10, L45, E66, and R125.

Belongs to the class I-like SAM-binding methyltransferase superfamily. TPMT family.

Its subcellular location is the cytoplasm. The catalysed reaction is S-adenosyl-L-methionine + a thiopurine = S-adenosyl-L-homocysteine + a thiopurine S-methylether.. The sequence is that of Probable thiopurine S-methyltransferase from Yarrowia lipolytica (strain CLIB 122 / E 150) (Yeast).